We begin with the raw amino-acid sequence, 385 residues long: Zinc finger protein B385R (385 aa).

A C2H2-type zinc finger spans residues 166–190 (LQCPNCGCIQELMGTIFDETHFYNH).

The protein belongs to the asfivirus B385R family.

The polypeptide is Zinc finger protein B385R (Ornithodoros (relapsing fever ticks)).